The following is a 432-amino-acid chain: Adenylosuccinate synthetase (432 aa).

GTP is bound by residues 13-19 (GDEGKGK) and 41-43 (GHT). The Proton acceptor role is filled by Asp-14. Asp-14 and Gly-41 together coordinate Mg(2+). Residues 14-17 (DEGK), 39-42 (NAGH), Thr-130, Arg-144, Gln-225, Thr-240, and Arg-304 contribute to the IMP site. Residue His-42 is the Proton donor of the active site. 300–306 (ATTGRRR) is a substrate binding site. Residues Arg-306, 332 to 334 (KLD), and 415 to 417 (STG) each bind GTP.

Belongs to the adenylosuccinate synthetase family. Homodimer. Mg(2+) serves as cofactor.

It is found in the cytoplasm. The enzyme catalyses IMP + L-aspartate + GTP = N(6)-(1,2-dicarboxyethyl)-AMP + GDP + phosphate + 2 H(+). Its pathway is purine metabolism; AMP biosynthesis via de novo pathway; AMP from IMP: step 1/2. In terms of biological role, plays an important role in the de novo pathway of purine nucleotide biosynthesis. Catalyzes the first committed step in the biosynthesis of AMP from IMP. The chain is Adenylosuccinate synthetase from Shigella flexneri serotype 5b (strain 8401).